We begin with the raw amino-acid sequence, 195 residues long: Chromophore lyase CpcT/CpeT 2 (195 aa).

It belongs to the CpcT/CpeT biliprotein lyase family.

In terms of biological role, covalently attaches a chromophore to Cys residue(s) of phycobiliproteins. This chain is Chromophore lyase CpcT/CpeT 2, found in Trichodesmium erythraeum (strain IMS101).